The sequence spans 2462 residues: Non-reducing polyketide synthase ausA (2462 aa).

Residues 16 to 253 form an N-terminal acylcarrier protein transacylase domain (SAT) region; the sequence is VFFGPVYPEL…HTADHIPAMK (238 aa). Residues 385–801 form the Ketosynthase family 3 (KS3) domain; the sequence is SAPIAVTGFA…GSNAVIVVKE (417 aa). Residues C550, H685, and H724 each act as for beta-ketoacyl synthase activity in the active site. The malonyl-CoA:ACP transacylase (MAT) domain stretch occupies residues 904-1208; that stretch reads LCFGGQTGDT…LPIDLQESTA (305 aa). S991 (for acyl/malonyl transferase activity) is an active-site residue. The N-terminal hotdog fold stretch occupies residues 1274–1403; it reads HDDGLLQLVE…GKVLLDPQAA (130 aa). In terms of domain architecture, PKS/mFAS DH spans 1274–1581; sequence HDDGLLQLVE…FTSVSIQSLK (308 aa). The tract at residues 1277-1580 is product template (PT) domain; it reads GLLQLVERDA…TFTSVSIQSL (304 aa). H1307 serves as the catalytic Proton acceptor; for dehydratase activity. Residues 1431–1581 are C-terminal hotdog fold; it reads SSNGLKRATV…FTSVSIQSLK (151 aa). Catalysis depends on D1489, which acts as the Proton donor; for dehydratase activity. The Carrier domain maps to 1613–1690; sequence VSDDHHLRAV…GLAHRISPSS (78 aa). Position 1650 is an O-(pantetheine 4'-phosphoryl)serine (S1650). Positions 1850 to 2083 are methyltransferase (CMeT) domain; it reads QHASEHKLLR…GFNWVDWTDN (234 aa). Residues 2112 to 2462 are thioesterase (TE) domain; the sequence is TPARVETVRY…YEFLRQHVAV (351 aa). Residues S2235, D2398, and H2430 each act as for thioesterase activity in the active site.

The enzyme catalyses 3 malonyl-CoA + acetyl-CoA + 2 S-adenosyl-L-methionine = 3,5-dimethylorsellinate + 2 S-adenosyl-L-homocysteine + 3 CO2 + 4 CoA. Its pathway is secondary metabolite biosynthesis; terpenoid biosynthesis. Its function is as follows. Non-reducing polyketide synthase; part of the gene cluster that mediates the biosynthesis of calidodehydroaustin, a fungal meroterpenoid. The first step of the pathway is the synthesis of 3,5-dimethylorsellinic acid by the polyketide synthase ausA. 3,5-dimethylorsellinic acid is then prenylated by the polyprenyl transferase ausN. Further epoxidation by the FAD-dependent monooxygenase ausM and cyclization by the probable terpene cyclase ausL lead to the formation of protoaustinoid A. Protoaustinoid A is then oxidized to spiro-lactone preaustinoid A3 by the combined action of the FAD-binding monooxygenases ausB and ausC, and the dioxygenase ausE. Acid-catalyzed keto-rearrangement and ring contraction of the tetraketide portion of preaustinoid A3 by ausJ lead to the formation of preaustinoid A4. The aldo-keto reductase ausK, with the help of ausH, is involved in the next step by transforming preaustinoid A4 into isoaustinone which is in turn hydroxylated by the P450 monooxygenase ausI to form austinolide. The cytochrome P450 monooxygenase ausG modifies austinolide to austinol. Austinol is further acetylated to austin by the O-acetyltransferase ausP, which spontaneously changes to dehydroaustin. The cytochrome P450 monooxygenase ausR then converts dehydroaustin is into 7-dehydrodehydroaustin. The hydroxylation catalyzed by ausR permits the O-acetyltransferase ausQ to add an additional acetyl group to the molecule, leading to the formation of acetoxydehydroaustin. The short chain dehydrogenase ausT catalyzes the reduction of the double bond present between carbon atoms 1 and 2 to convert 7-dehydrodehydroaustin into 1,2-dihydro-7-hydroxydehydroaustin. AusQ catalyzes not only an acetylation reaction but also the addition of the PKS ausV diketide product to 1,2-dihydro-7-hydroxydehydroaustin, forming precalidodehydroaustin. Finally, the iron/alpha-ketoglutarate-dependent dioxygenase converts precalidodehydroaustin into calidodehydroaustin. The chain is Non-reducing polyketide synthase ausA from Aspergillus calidoustus.